A 251-amino-acid chain; its full sequence is Protein unc-119 homolog B (251 aa).

Positions 1–28 (MSGSNPKAAAAASAAGPGGLVAGKEEKK) are disordered. Serine 2 bears the N-acetylserine mark. Lysine 24 bears the N6-acetyllysine mark. Residue tyrosine 142 participates in tetradecanoate binding.

This sequence belongs to the PDE6D/unc-119 family. Found in a complex with ARL3, RP2 and UNC119B; RP2 induces hydrolysis of GTP ARL3 in the complex, leading to the release of UNC119B. Interacts with NPHP3 (when myristoylated). Interacts with CYS1 (when myristoylated). Interacts with MACIR; interaction only takes place when UNC119B is not liganded with myristoylated proteins.

It is found in the cell projection. Its subcellular location is the cilium. Its function is as follows. Myristoyl-binding protein that acts as a cargo adapter: specifically binds the myristoyl moiety of a subset of N-terminally myristoylated proteins and is required for their localization. Binds myristoylated NPHP3 and plays a key role in localization of NPHP3 to the primary cilium membrane. Does not bind all myristoylated proteins. Probably plays a role in trafficking proteins in photoreceptor cells. This is Protein unc-119 homolog B (UNC119B) from Homo sapiens (Human).